The following is a 332-amino-acid chain: MSTPEVVREAQSTVAYNPLAKQKAAAKLSRIPIKVEQGEVLKKPEWIRVKAGSPTTRFYEIKEILREHKLHTVCEEASCPNIGECFGKGTATFMIMGDKCTRRCPFCDVGHGRPDPLDKDEPLNLARTIAALKLKYVVITSVDRDDLRDGGSGHFVECIQNIRALSPATQIEILVPDFRGRDDRALEILKAAPPDVMNHNLETAPRLYKEARPGSDYQFSLNLLKKFKALHPGVPTKSGIMVGLGETDEEILQVMRDMRAHDIDMLTIGQYLAPSNSHLPVRRYVHPDTFKMYEEEAYKMGFTHAAVGAMVRSSYHADQQAHAAGLQAGPQG.

Residues C74, C79, C85, C100, C104, C107, and S314 each coordinate [4Fe-4S] cluster. The region spanning 85 to 303 is the Radical SAM core domain; that stretch reads CFGKGTATFM…EEEAYKMGFT (219 aa).

Belongs to the radical SAM superfamily. Lipoyl synthase family. Requires [4Fe-4S] cluster as cofactor.

The protein localises to the cytoplasm. It carries out the reaction [[Fe-S] cluster scaffold protein carrying a second [4Fe-4S](2+) cluster] + N(6)-octanoyl-L-lysyl-[protein] + 2 oxidized [2Fe-2S]-[ferredoxin] + 2 S-adenosyl-L-methionine + 4 H(+) = [[Fe-S] cluster scaffold protein] + N(6)-[(R)-dihydrolipoyl]-L-lysyl-[protein] + 4 Fe(3+) + 2 hydrogen sulfide + 2 5'-deoxyadenosine + 2 L-methionine + 2 reduced [2Fe-2S]-[ferredoxin]. Its pathway is protein modification; protein lipoylation via endogenous pathway; protein N(6)-(lipoyl)lysine from octanoyl-[acyl-carrier-protein]: step 2/2. In terms of biological role, catalyzes the radical-mediated insertion of two sulfur atoms into the C-6 and C-8 positions of the octanoyl moiety bound to the lipoyl domains of lipoate-dependent enzymes, thereby converting the octanoylated domains into lipoylated derivatives. The protein is Lipoyl synthase of Paracidovorax citrulli (strain AAC00-1) (Acidovorax citrulli).